Consider the following 485-residue polypeptide: Glutamate--tRNA ligase (485 aa).

The 'HIGH' region motif lies at 11 to 21 (PSPTGLLHIGN). Residues 255 to 259 (KLSKR) carry the 'KMSKS' region motif. Lys-258 contributes to the ATP binding site.

Belongs to the class-I aminoacyl-tRNA synthetase family. Glutamate--tRNA ligase type 1 subfamily. Monomer.

The protein localises to the cytoplasm. It catalyses the reaction tRNA(Glu) + L-glutamate + ATP = L-glutamyl-tRNA(Glu) + AMP + diphosphate. Catalyzes the attachment of glutamate to tRNA(Glu) in a two-step reaction: glutamate is first activated by ATP to form Glu-AMP and then transferred to the acceptor end of tRNA(Glu). This chain is Glutamate--tRNA ligase, found in Streptococcus gordonii (strain Challis / ATCC 35105 / BCRC 15272 / CH1 / DL1 / V288).